Reading from the N-terminus, the 359-residue chain is Phosphate acyltransferase (359 aa).

The protein belongs to the PlsX family. In terms of assembly, homodimer. Probably interacts with PlsY.

The protein localises to the cytoplasm. It carries out the reaction a fatty acyl-[ACP] + phosphate = an acyl phosphate + holo-[ACP]. It functions in the pathway lipid metabolism; phospholipid metabolism. Catalyzes the reversible formation of acyl-phosphate (acyl-PO(4)) from acyl-[acyl-carrier-protein] (acyl-ACP). This enzyme utilizes acyl-ACP as fatty acyl donor, but not acyl-CoA. This is Phosphate acyltransferase from Salmonella agona (strain SL483).